Here is a 161-residue protein sequence, read N- to C-terminus: Phosphopantetheine adenylyltransferase (161 aa).

Substrate is bound at residue threonine 10. ATP-binding positions include 10–11 (TF) and histidine 18. The substrate site is built by lysine 42, leucine 74, and arginine 88. ATP is bound by residues 89–91 (GVR), glutamate 99, and 123–129 (YIHISST).

This sequence belongs to the bacterial CoaD family. Homohexamer. Requires Mg(2+) as cofactor.

It is found in the cytoplasm. The enzyme catalyses (R)-4'-phosphopantetheine + ATP + H(+) = 3'-dephospho-CoA + diphosphate. Its pathway is cofactor biosynthesis; coenzyme A biosynthesis; CoA from (R)-pantothenate: step 4/5. Functionally, reversibly transfers an adenylyl group from ATP to 4'-phosphopantetheine, yielding dephospho-CoA (dPCoA) and pyrophosphate. This chain is Phosphopantetheine adenylyltransferase, found in Aquifex aeolicus (strain VF5).